Here is a 319-residue protein sequence, read N- to C-terminus: tRNA U34 carboxymethyltransferase (319 aa).

Residues Lys-88, Trp-102, Lys-107, Gly-126, 176–177 (LE), Met-192, Tyr-196, and Arg-311 each bind carboxy-S-adenosyl-L-methionine.

This sequence belongs to the class I-like SAM-binding methyltransferase superfamily. CmoB family. In terms of assembly, homotetramer.

It catalyses the reaction carboxy-S-adenosyl-L-methionine + 5-hydroxyuridine(34) in tRNA = 5-carboxymethoxyuridine(34) in tRNA + S-adenosyl-L-homocysteine + H(+). In terms of biological role, catalyzes carboxymethyl transfer from carboxy-S-adenosyl-L-methionine (Cx-SAM) to 5-hydroxyuridine (ho5U) to form 5-carboxymethoxyuridine (cmo5U) at position 34 in tRNAs. This chain is tRNA U34 carboxymethyltransferase, found in Azotobacter vinelandii (strain DJ / ATCC BAA-1303).